Here is a 107-residue protein sequence, read N- to C-terminus: MAHATLSAAPSNPRLLRVALLLLLLVAASRRAAGASVVTELRCQCLQTLQGIHLKNIQSVNVRSPGPHCAQTEVIATLKNGKKACLNPASPMVQKIIEKILNKGSTN.

Positions 1–34 are cleaved as a signal peptide; that stretch reads MAHATLSAAPSNPRLLRVALLLLLLVAASRRAAG. 2 disulfides stabilise this stretch: Cys43–Cys69 and Cys45–Cys85.

The protein belongs to the intercrine alpha (chemokine CxC) family. Post-translationally, N-terminal processed form GRO-gamma(5-73) is produced by proteolytic cleavage after secretion from peripheral blood monocytes.

The protein localises to the secreted. Its function is as follows. Ligand for CXCR2. Has chemotactic activity for neutrophils. May play a role in inflammation and exert its effects on endothelial cells in an autocrine fashion. In vitro, the processed form GRO-gamma(5-73) shows a fivefold higher chemotactic activity for neutrophilic granulocytes. The polypeptide is C-X-C motif chemokine 3 (CXCL3) (Homo sapiens (Human)).